Reading from the N-terminus, the 285-residue chain is Nucleotide-binding protein CD630_34000 (285 aa).

Position 8–15 (Gly-8–Ser-15) interacts with ATP. Position 59-62 (Asp-59–Gly-62) interacts with GTP.

Belongs to the RapZ-like family.

In terms of biological role, displays ATPase and GTPase activities. The protein is Nucleotide-binding protein CD630_34000 of Clostridioides difficile (strain 630) (Peptoclostridium difficile).